The sequence spans 484 residues: Probable cytochrome P450 508A1 (484 aa).

A helical transmembrane segment spans residues 1-21 (MALFEIIISLFVVYIIHNAIS). Residue cysteine 428 coordinates heme.

Belongs to the cytochrome P450 family. Requires heme as cofactor.

The protein localises to the membrane. This chain is Probable cytochrome P450 508A1 (cyp508A1-1), found in Dictyostelium discoideum (Social amoeba).